Consider the following 318-residue polypeptide: Mitochondrial thiamine pyrophosphate carrier (318 aa).

3 Solcar repeats span residues 13-106 (NSKL…LTEL), 116-202 (HQFS…LKRA), and 214-309 (TGNL…FCNL). Helical transmembrane passes span 19–39 (AVAG…LDVI), 87–107 (ILSI…TELL), 122–142 (FVCG…VDVL), 173–193 (VFYK…GLQF), 220–240 (LLCG…LDLF), and 293–313 (ALST…FHCI).

It belongs to the mitochondrial carrier (TC 2.A.29) family.

It is found in the mitochondrion membrane. It carries out the reaction thiamine phosphate(out) + thiamine diphosphate(in) = thiamine phosphate(in) + thiamine diphosphate(out). In terms of biological role, mitochondrial transporter mediating uptake of thiamine diphosphate into mitochondria. It is not clear if the antiporter activity is affected by the membrane potential or by the proton electrochemical gradient. The protein is Mitochondrial thiamine pyrophosphate carrier (Slc25a19) of Rattus norvegicus (Rat).